The sequence spans 250 residues: MQLVKYSASGNDFVIYHTFVKKDRSELAKLLCHRHEGIGADGLIVLLPHSRYDFEWQFYNADGSEAEMCGNGSRAAAHYAYSYGLASKQMRFLTLAGVIEASVEADVVESQLTKPKILDRKIEENGKRWWLIDTGVPHLVTFVEDLNQFDKNESKRLRNKYNANVNYGIIRDLENVGVRTYERGVEDETLACGTGMAATFLRAFEEGVVNPTVTVVPKSGEELQLRYENEKLFFKGRVKKVFETFKEGIW.

Substrate-binding residues include asparagine 11 and asparagine 60. Cysteine 69 acts as the Proton donor in catalysis. Substrate-binding positions include 70–71 (GN), asparagine 164, and 182–183 (ER). Cysteine 192 serves as the catalytic Proton acceptor. 193–194 (GT) is a substrate binding site.

It belongs to the diaminopimelate epimerase family. Homodimer.

Its subcellular location is the cytoplasm. The enzyme catalyses (2S,6S)-2,6-diaminopimelate = meso-2,6-diaminopimelate. The protein operates within amino-acid biosynthesis; L-lysine biosynthesis via DAP pathway; DL-2,6-diaminopimelate from LL-2,6-diaminopimelate: step 1/1. Functionally, catalyzes the stereoinversion of LL-2,6-diaminopimelate (L,L-DAP) to meso-diaminopimelate (meso-DAP), a precursor of L-lysine and an essential component of the bacterial peptidoglycan. In Nitratiruptor sp. (strain SB155-2), this protein is Diaminopimelate epimerase.